A 203-amino-acid chain; its full sequence is 3-isopropylmalate dehydratase small subunit (203 aa).

This sequence belongs to the LeuD family. LeuD type 1 subfamily. Heterodimer of LeuC and LeuD.

The catalysed reaction is (2R,3S)-3-isopropylmalate = (2S)-2-isopropylmalate. It participates in amino-acid biosynthesis; L-leucine biosynthesis; L-leucine from 3-methyl-2-oxobutanoate: step 2/4. Its function is as follows. Catalyzes the isomerization between 2-isopropylmalate and 3-isopropylmalate, via the formation of 2-isopropylmaleate. The protein is 3-isopropylmalate dehydratase small subunit of Rhodospirillum centenum (strain ATCC 51521 / SW).